The primary structure comprises 331 residues: Photosystem II assembly lipoprotein Ycf48 (331 aa).

The first 23 residues, 1-23 (MIPVIRSFLSLLLCVGLTFGLGG), serve as a signal peptide directing secretion. Cys24 carries the N-palmitoyl cysteine lipid modification. Cys24 carries the S-diacylglycerol cysteine lipid modification.

The protein belongs to the Ycf48 family. In terms of assembly, part of early PSII assembly complexes which includes D1 (psbA) and PsbI; not found in mature PSII. Binds to the lumenal side of PSII complexes. Interacts with YidC.

It is found in the cellular thylakoid membrane. Its function is as follows. A factor required for optimal assembly of photosystem II (PSII), acting in the early stages of PSII assembly. Also plays a role in replacement of photodamaged D1 (psbA). Assists YidC in synthesis of chlorophyll-binding proteins. The polypeptide is Photosystem II assembly lipoprotein Ycf48 (Synechococcus sp. (strain RCC307)).